Here is a 601-residue protein sequence, read N- to C-terminus: Vesicular glutamate transporter 3 (601 aa).

Residues 1–89 are Cytoplasmic-facing; that stretch reads MPFKAFDTFK…CSCCGIPKRY (89 aa). The chain crosses the membrane as a helical span at residues 90-110; that stretch reads IIAVMSGLGFCISFGIRCNLG. At 111–143 the chain is on the vesicular side; the sequence is VAIVEMVNNSTVYVDGKPEIQTAQFNWDPETVG. A glycan (N-linked (GlcNAc...) asparagine) is linked at N119. Residues 144–164 form a helical membrane-spanning segment; that stretch reads LIHGSFFWGYIVTQIPGGFIS. At 165–166 the chain is on the cytoplasmic side; it reads NK. Residues 167 to 187 form a helical membrane-spanning segment; the sequence is FAASRVFGAAIFLTSTLNMFI. The Vesicular segment spans residues 188–195; sequence PSAARVHY. Residues 196-216 traverse the membrane as a helical segment; it reads GCVMGVRILQGLVEGVTYPAC. Over 217–234 the chain is Cytoplasmic; the sequence is HGMWSKWAPPLERSRLAT. A helical membrane pass occupies residues 235-255; that stretch reads TSFCGSYAGAVVAMPLAGVLV. Residues 256–262 lie on the Vesicular side of the membrane; that stretch reads QYIGWAS. Residues 263-283 traverse the membrane as a helical segment; that stretch reads VFYIYGMFGIIWYMFWLLQAY. At 284–327 the chain is on the cytoplasmic side; that stretch reads ECPAAHPTISNAERTYIETSIGEGANLASLSKFNTPWRRFFTSL. Residues 328-348 traverse the membrane as a helical segment; sequence PVYAIIVANFCRSWTFYLLLI. Over 349–366 the chain is Vesicular; sequence SQPAYFEEVFGFAISKVG. A helical membrane pass occupies residues 367-387; the sequence is LLSAVPHMVMTIVVPIGGQLA. At 388-403 the chain is on the cytoplasmic side; sequence DYLRSRKILTTTAVRK. A helical membrane pass occupies residues 404–424; it reads IMNCGGFGMEATLLLVVGFSH. The Vesicular segment spans residues 425 to 426; the sequence is TK. The helical transmembrane segment at 427 to 447 threads the bilayer; sequence GVAISFLVLAVGFSGFAISGF. The Cytoplasmic portion of the chain corresponds to 448–460; sequence NVNHLDIAPRYAS. A helical transmembrane segment spans residues 461-481; it reads ILMGISNGVGTLSGMVCPLIV. The Vesicular portion of the chain corresponds to 482–494; sequence GAMTKHKTREEWQ. A helical membrane pass occupies residues 495–515; it reads NVFLIAALVHYSGVIFYGVFA. At 516–598 the chain is on the cytoplasmic side; it reads SGEKQDWADP…LSYQAEGDFS (83 aa). Residues 576–601 form a disordered region; the sequence is RQQRESAFDGEEPLSYQAEGDFSETS.

The protein belongs to the major facilitator superfamily. Sodium/anion cotransporter family. VGLUT subfamily. As to expression, expressed in restricted areas of the brain. Highest expression is found in the neurons of the basal forebrain, the hippocampal formation, and the majority of the neurons of the mesencephalic raphe nuclei. Expressed in inner hair cells of the ear.

It localises to the cytoplasmic vesicle. The protein localises to the secretory vesicle. It is found in the synaptic vesicle membrane. Its subcellular location is the cell membrane. The protein resides in the synapse. It localises to the synaptosome. The catalysed reaction is L-glutamate(out) = L-glutamate(in). It carries out the reaction 3 Na(+)(out) + phosphate(out) = 3 Na(+)(in) + phosphate(in). It catalyses the reaction chloride(in) = chloride(out). With respect to regulation, the L-glutamate uniporter activity exhibits a biphasic dependence on chloride concentration. Chloride channel activity is allosterically activated by lumenal H(+) and Cl(-) leading to synaptic vesicles acidification. The L-glutamate transport activity is allosterically activated by lumenal H(+) and Cl(-), preventing non-vesicular L-glutamate release. Its function is as follows. Multifunctional transporter that transports L-glutamate as well as multiple ions such as chloride, sodium and phosphate. At the synaptic vesicle membrane, mainly functions as an uniporter that mediates the uptake of L-glutamate into synaptic vesicles at presynaptic nerve terminals of excitatory neural cells. The L-glutamate uniporter activity is electrogenic and is driven by the proton electrochemical gradient, mainly by the electrical gradient established by the vacuolar H(+)-ATPase across the synaptic vesicle membrane. In addition, functions as a chloride channel that allows a chloride permeation through the synaptic vesicle membrane that affects the proton electrochemical gradient and promotes synaptic vesicles acidification. At the plasma membrane, following exocytosis, functions as a symporter of Na(+) and phosphate from the extracellular space to the cytoplasm allowing synaptic phosphate homeostasis regulation. The symporter activity is electrogenic. Moreover, operates synergistically with SLC18A3/VACHT under a constant H(+) gradient, thereby allowing striatal vesicular acetylcholine uptake. The sequence is that of Vesicular glutamate transporter 3 from Mus musculus (Mouse).